A 986-amino-acid polypeptide reads, in one-letter code: Translation initiation factor IF-2 (986 aa).

Basic and acidic residues predominate over residues 75-94; the sequence is KRLSRLEEQSRKTYEKEQHL. 4 disordered regions span residues 75–105, 127–148, 185–258, and 277–394; these read KRLS…APPL, PPSK…PDAP, SEVP…VSFD, and GRHK…HEED. 2 stretches are compositionally biased toward low complexity: residues 185–210 and 218–235; these read SEVP…ESPL and SEPQ…LPEI. The span at 292-313 shows a compositional bias: basic and acidic residues; it reads DALKDEFEPKPAEESRVEEKVV. Positions 315 to 338 are enriched in low complexity; sequence AKKPPVKAAADVKPKPVVADSSSS. Residues 339-348 are compositionally biased toward basic residues; it reads AKKKGKKKKK. The region spanning 483–653 is the tr-type G domain; the sequence is TRPPVVTIMG…LTEAEMRELR (171 aa). The tract at residues 492–499 is G1; it reads GHVDHGKT. 492–499 provides a ligand contact to GTP; that stretch reads GHVDHGKT. Residues 517–521 form a G2 region; the sequence is GITQH. The segment at 539–542 is G3; sequence DTPG. Residues 539 to 543 and 593 to 596 contribute to the GTP site; these read DTPGH and NKID. The interval 593–596 is G4; that stretch reads NKID. A G5 region spans residues 629–631; that stretch reads SAK.

This sequence belongs to the TRAFAC class translation factor GTPase superfamily. Classic translation factor GTPase family. IF-2 subfamily.

Its subcellular location is the cytoplasm. Functionally, one of the essential components for the initiation of protein synthesis. Protects formylmethionyl-tRNA from spontaneous hydrolysis and promotes its binding to the 30S ribosomal subunits. Also involved in the hydrolysis of GTP during the formation of the 70S ribosomal complex. This is Translation initiation factor IF-2 from Pelodictyon phaeoclathratiforme (strain DSM 5477 / BU-1).